A 435-amino-acid polypeptide reads, in one-letter code: MTKKVTIIGAGLAGSEAAWQVANAGVPVDLYEMRPVKKTPAHQTENFAELVCSNSLRGNSLTNAVGVLKEEMRRLNSIIIGSADQTAVPAGGALAVDRDSFSETITEKIKSHPLITIKNEEITDIPEGIVIIATGPLTSESLSQKIQEFNGSEGFYFYDAAAPIIDKSTIDMDKVYLKSRYNKGEAAYLNCPMTEEEFNAFHEALVNAEVVPLRTFEKEKFFEGCMPIEVMAQRGIKTMLFGPMKPVGLEDPKTGKRPYAVIQLRQDNAAASLYNIVGFQTHLKWGEQKRVFRMIPGLENAEFVRYGVMHRNSFMNSPELLKPTYQSKKRDDLFFAGQMTGVEGYVESAASGLLAGINAARLAKGEEPIEFPRETTLGSMAYYITHAEGKHFQPMNANFGLFPELPERIRDKKERYEAIANRALDVQAQVIQSLD.

Position 9–14 (9–14 (GAGLAG)) interacts with FAD.

This sequence belongs to the MnmG family. TrmFO subfamily. Requires FAD as cofactor.

It is found in the cytoplasm. It catalyses the reaction uridine(54) in tRNA + (6R)-5,10-methylene-5,6,7,8-tetrahydrofolate + NADH + H(+) = 5-methyluridine(54) in tRNA + (6S)-5,6,7,8-tetrahydrofolate + NAD(+). The catalysed reaction is uridine(54) in tRNA + (6R)-5,10-methylene-5,6,7,8-tetrahydrofolate + NADPH + H(+) = 5-methyluridine(54) in tRNA + (6S)-5,6,7,8-tetrahydrofolate + NADP(+). Functionally, catalyzes the folate-dependent formation of 5-methyl-uridine at position 54 (M-5-U54) in all tRNAs. The sequence is that of Methylenetetrahydrofolate--tRNA-(uracil-5-)-methyltransferase TrmFO from Enterococcus faecalis (strain ATCC 700802 / V583).